The sequence spans 243 residues: Urease accessory protein UreF (243 aa).

It belongs to the UreF family. UreD, UreF and UreG form a complex that acts as a GTP-hydrolysis-dependent molecular chaperone, activating the urease apoprotein by helping to assemble the nickel containing metallocenter of UreC. The UreE protein probably delivers the nickel.

Its subcellular location is the cytoplasm. Required for maturation of urease via the functional incorporation of the urease nickel metallocenter. This chain is Urease accessory protein UreF, found in Xanthobacter autotrophicus (strain ATCC BAA-1158 / Py2).